A 293-amino-acid polypeptide reads, in one-letter code: Ribosomal protein L11 methyltransferase (293 aa).

4 residues coordinate S-adenosyl-L-methionine: Thr145, Gly166, Asp188, and Asn230.

The protein belongs to the methyltransferase superfamily. PrmA family.

Its subcellular location is the cytoplasm. The enzyme catalyses L-lysyl-[protein] + 3 S-adenosyl-L-methionine = N(6),N(6),N(6)-trimethyl-L-lysyl-[protein] + 3 S-adenosyl-L-homocysteine + 3 H(+). Its function is as follows. Methylates ribosomal protein L11. This chain is Ribosomal protein L11 methyltransferase, found in Escherichia coli O81 (strain ED1a).